A 1273-amino-acid chain; its full sequence is DNA-directed RNA polymerase subunit beta (1273 aa).

The protein belongs to the RNA polymerase beta chain family. The RNAP catalytic core consists of 2 alpha, 1 beta, 1 beta' and 1 omega subunit. When a sigma factor is associated with the core the holoenzyme is formed, which can initiate transcription.

It catalyses the reaction RNA(n) + a ribonucleoside 5'-triphosphate = RNA(n+1) + diphosphate. Its function is as follows. DNA-dependent RNA polymerase catalyzes the transcription of DNA into RNA using the four ribonucleoside triphosphates as substrates. In Phytoplasma mali (strain AT), this protein is DNA-directed RNA polymerase subunit beta.